The primary structure comprises 232 residues: Large ribosomal subunit protein uL1 (232 aa).

The protein belongs to the universal ribosomal protein uL1 family. Part of the 50S ribosomal subunit.

Binds directly to 23S rRNA. The L1 stalk is quite mobile in the ribosome, and is involved in E site tRNA release. In terms of biological role, protein L1 is also a translational repressor protein, it controls the translation of the L11 operon by binding to its mRNA. In Dichelobacter nodosus (strain VCS1703A), this protein is Large ribosomal subunit protein uL1.